A 551-amino-acid chain; its full sequence is MFS efflux transporter aclA (551 aa).

A run of 8 helical transmembrane segments spans residues 26-46 (WAVF…ITAI), 64-84 (VWIA…IGQI), 93-113 (PMII…GATS), 125-145 (GLGA…LVPL), 154-174 (IALS…GALV), 181-201 (WVFY…VLCL), 220-240 (WVGN…LVIG), and 251-271 (VLVP…FEAS). Asn286 carries an N-linked (GlcNAc...) asparagine glycan. Transmembrane regions (helical) follow at residues 294–314 (VLAF…TLFF), 327–347 (VDVI…GAIM), 356–376 (LHWA…TWDA), 385–405 (ILQC…LPAI), 420–440 (AYAF…AVVF), and 492–512 (LRTV…LVVV).

Belongs to the major facilitator superfamily.

It is found in the membrane. Functionally, MFS efflux transporter; part of the gene cluster that mediates the biosynthesis of aspirochlorine (or antibiotic A30641), an unusual halogenated spiro compound with distinctive antifungal properties due to selective inhibition of protein biosynthesis, and which is also active against bacteria, viruses, and murine tumor cells. This is MFS efflux transporter aclA from Aspergillus oryzae (strain ATCC 42149 / RIB 40) (Yellow koji mold).